Here is a 767-residue protein sequence, read N- to C-terminus: Two-component response regulator-like PRR73 (767 aa).

The disordered stretch occupies residues 1-64 (MGSACEAGTD…EPQQTDEQKE (64 aa)). The region spanning 82–200 (RVLLVENDDS…ELKNLWQHVW (119 aa)) is the Response regulatory domain. Low complexity predominate over residues 205–214 (SSSGSGSESG). 5 disordered regions span residues 205-272 (SSSG…QSSW), 312-388 (RWLP…NEPT), 476-546 (ASNQ…RGKV), 646-701 (ANYS…SGSG), and 727-767 (NFGK…DEDR). Acidic residues predominate over residues 238–252 (DNEDDDDNDEDDDDL). Composition is skewed to polar residues over residues 263 to 272 (DNGSGTQSSW), 343 to 361 (RNSS…VNPT), and 488 to 497 (CSPQDNSSEA). A compositionally biased stretch (low complexity) spans 518–531 (GSNGSSNNNDMGSS). Positions 532–543 (TKNAITKPSSNR) are enriched in polar residues. Residues 689–700 (GAGGGNGSGSGS) show a composition bias toward gly residues. The region spanning 712–754 (REAALNKFRQKRKVRNFGKKVRYQSRKRLAEQRPRIRGQFVRQ) is the CCT domain. The span at 727–738 (NFGKKVRYQSRK) shows a compositional bias: basic residues.

This sequence belongs to the ARR-like family.

The protein resides in the nucleus. Controls photoperiodic flowering response. Seems to be one of the component of the circadian clock. Expression of several members of the ARR-like family is controlled by circadian rhythm. The particular coordinated sequential expression of PRR73, PRR37, PRR95, PRR59 and PPR1 result to circadian waves that may be at the basis of the endogenous circadian clock. In Oryza sativa subsp. japonica (Rice), this protein is Two-component response regulator-like PRR73 (PRR73).